The sequence spans 751 residues: Transposable element P transposase (751 aa).

The THAP-type zinc finger occupies Met-1 to Val-77.

Its function is as follows. P-element transposase that specifically mediates transposition of P-elements. Mediates both; precise and imprecise excision. The chain is Transposable element P transposase from Drosophila melanogaster (Fruit fly).